Consider the following 667-residue polypeptide: Beta-galactosidase LacA (667 aa).

Residue R109 participates in substrate binding. C113 lines the Zn(2+) pocket. N147 serves as a coordination point for substrate. The active-site Proton donor is E148. 3 residues coordinate Zn(2+): C153, C155, and C158. E307 functions as the Nucleophile in the catalytic mechanism. Residues W315 and 355–358 (EKFH) contribute to the substrate site.

Belongs to the glycosyl hydrolase 42 family.

The catalysed reaction is Hydrolysis of terminal non-reducing beta-D-galactose residues in beta-D-galactosides.. Its function is as follows. Hydrolyzes lactose, oNP-galactoside (oNPG), pNP-galactosidase (pNPG), pNP-mannoside, pNP-glucoside, pNP-fucoside, pNP-N-acetylglucosamide, but not pNP-arabinoside or 4-methylumbelliferyl-beta-galactopyranoside (MUG). Transgalactosylates lactose at 10 g/L, but not at 270 g/L. The protein is Beta-galactosidase LacA of Lactobacillus acidophilus.